The primary structure comprises 140 residues: MLMPKKVKHRKQMKGRMSGTPQRGVSLAFGDYGLQATECGWLDSRQIEAARIAMNRYIKRGGKIWIRIFPDKPLTAKPAETRMGKGKGSPDSWVCVIKPGRILYEMEGVTEEVAREAFRLAAHKLPIPTKFTSRKDANEG.

Residues 1–14 are compositionally biased toward basic residues; it reads MLMPKKVKHRKQMK. The tract at residues 1–20 is disordered; that stretch reads MLMPKKVKHRKQMKGRMSGT.

Belongs to the universal ribosomal protein uL16 family. Part of the 50S ribosomal subunit.

Its function is as follows. Binds 23S rRNA and is also seen to make contacts with the A and possibly P site tRNAs. In Geotalea daltonii (strain DSM 22248 / JCM 15807 / FRC-32) (Geobacter daltonii), this protein is Large ribosomal subunit protein uL16.